The sequence spans 466 residues: Glutamyl-tRNA reductase (466 aa).

Substrate contacts are provided by residues 47–50, S107, 112–114, and Q118; these read TCNR and EQQ. The Nucleophile role is filled by C48. An NADP(+)-binding site is contributed by 194 to 199; that stretch reads GAGAMS.

Belongs to the glutamyl-tRNA reductase family. Homodimer.

It catalyses the reaction (S)-4-amino-5-oxopentanoate + tRNA(Glu) + NADP(+) = L-glutamyl-tRNA(Glu) + NADPH + H(+). It participates in porphyrin-containing compound metabolism; protoporphyrin-IX biosynthesis; 5-aminolevulinate from L-glutamyl-tRNA(Glu): step 1/2. Its function is as follows. Catalyzes the NADPH-dependent reduction of glutamyl-tRNA(Glu) to glutamate 1-semialdehyde (GSA). In Corynebacterium efficiens (strain DSM 44549 / YS-314 / AJ 12310 / JCM 11189 / NBRC 100395), this protein is Glutamyl-tRNA reductase.